The following is a 137-amino-acid chain: Small ribosomal subunit protein uS12 (137 aa).

Residues Met-1–Lys-57 are disordered. At Asp-102 the chain carries 3-methylthioaspartic acid.

The protein belongs to the universal ribosomal protein uS12 family. In terms of assembly, part of the 30S ribosomal subunit. Contacts proteins S8 and S17. May interact with IF1 in the 30S initiation complex.

In terms of biological role, with S4 and S5 plays an important role in translational accuracy. Functionally, interacts with and stabilizes bases of the 16S rRNA that are involved in tRNA selection in the A site and with the mRNA backbone. Located at the interface of the 30S and 50S subunits, it traverses the body of the 30S subunit contacting proteins on the other side and probably holding the rRNA structure together. The combined cluster of proteins S8, S12 and S17 appears to hold together the shoulder and platform of the 30S subunit. The chain is Small ribosomal subunit protein uS12 from Streptococcus gordonii (strain Challis / ATCC 35105 / BCRC 15272 / CH1 / DL1 / V288).